We begin with the raw amino-acid sequence, 127 residues long: Small ribosomal subunit protein uS13 (127 aa).

A disordered region spans residues His-92–Lys-127. Residues Gln-101–Lys-127 are compositionally biased toward basic residues.

This sequence belongs to the universal ribosomal protein uS13 family. As to quaternary structure, part of the 30S ribosomal subunit. Forms a loose heterodimer with protein S19. Forms two bridges to the 50S subunit in the 70S ribosome.

In terms of biological role, located at the top of the head of the 30S subunit, it contacts several helices of the 16S rRNA. In the 70S ribosome it contacts the 23S rRNA (bridge B1a) and protein L5 of the 50S subunit (bridge B1b), connecting the 2 subunits; these bridges are implicated in subunit movement. Contacts the tRNAs in the A and P-sites. In Gloeothece citriformis (strain PCC 7424) (Cyanothece sp. (strain PCC 7424)), this protein is Small ribosomal subunit protein uS13.